Consider the following 674-residue polypeptide: ATP-dependent DNA helicase Hel308 (674 aa).

ATP contacts are provided by residues Q27 and V44 to T51. The 167-residue stretch at I31–D197 folds into the Helicase ATP-binding domain. The short motif at D142–H145 is the DEAH box element. The Helicase C-terminal domain maps to S224–A411.

It belongs to the helicase family. Hel308 subfamily. In terms of assembly, monomer.

The catalysed reaction is Couples ATP hydrolysis with the unwinding of duplex DNA by translocating in the 3'-5' direction.. It carries out the reaction ATP + H2O = ADP + phosphate + H(+). In terms of biological role, DNA-dependent ATPase and 3'-5' DNA helicase that may be involved in repair of stalled replication forks. This Thermoplasma acidophilum (strain ATCC 25905 / DSM 1728 / JCM 9062 / NBRC 15155 / AMRC-C165) protein is ATP-dependent DNA helicase Hel308.